Here is a 364-residue protein sequence, read N- to C-terminus: DNA replication and repair protein RecF (364 aa).

30-37 (GENGSGKT) contacts ATP.

The protein belongs to the RecF family.

Its subcellular location is the cytoplasm. The RecF protein is involved in DNA metabolism; it is required for DNA replication and normal SOS inducibility. RecF binds preferentially to single-stranded, linear DNA. It also seems to bind ATP. The polypeptide is DNA replication and repair protein RecF (Pseudoalteromonas translucida (strain TAC 125)).